The chain runs to 232 residues: MRLLGCFFLIFLTWGSARAQGEYCHGWLDSAGNYQAGFQCPEDFDTADANICCGSCALRYCCAAADARLEQGSCTNHRELEKSGVSAQPVYVPFLIVGSIFIAFIIVGSLVAVYCCTCLRPKQTSQQPMRFTLRSYPPETLPMILTSGNLRTPSRQSSTATSSTSTGGSVRRLSSSRADPGYLVSSPPPPYSSAHSIHLNPSSTFLVSNQYFPYPLQPEAIANKSCPDFRQS.

A signal peptide spans 1-19 (MRLLGCFFLIFLTWGSARA). The Lumenal portion of the chain corresponds to 20–93 (QGEYCHGWLD…GVSAQPVYVP (74 aa)). A helical transmembrane segment spans residues 94-114 (FLIVGSIFIAFIIVGSLVAVY). The Cytoplasmic segment spans residues 115-232 (CCTCLRPKQT…NKSCPDFRQS (118 aa)). Residues 146–185 (TSGNLRTPSRQSSTATSSTSTGGSVRRLSSSRADPGYLVS) form a disordered region. Residues 151–177 (RTPSRQSSTATSSTSTGGSVRRLSSSR) show a composition bias toward low complexity.

It belongs to the shisa family. As to quaternary structure, interacts with fzd8 and fgfr1.

The protein localises to the endoplasmic reticulum membrane. Its function is as follows. Plays an essential role in the maturation of presomitic mesoderm cells by individual attenuation of both fgf and wnt signaling. Regulates head and somite developmen. Inhibits both wnt and fgf signaling through the regulation of protein maturation and cell surface transportation of their receptors within the endoplasmic reticulum. The sequence is that of Protein shisa-3 (shisa3) from Xenopus laevis (African clawed frog).